Here is a 430-residue protein sequence, read N- to C-terminus: Tektin-2 (430 aa).

Coiled-coil stretches lie at residues 75–162 (KETL…FQHL) and 226–380 (KNRA…IACK).

This sequence belongs to the tektin family. In terms of assembly, microtubule inner protein component of sperm flagellar doublet microtubules. May interact with CCDC172. In terms of processing, ubiquitinated, leading to its degradation. Deubiquitinated by USP16, promoting its stability. Post-translationally, tyrosine phosphorylated. As to expression, expressed in the testes (at protein level).

It is found in the cytoplasm. The protein localises to the cytoskeleton. The protein resides in the cilium axoneme. Its subcellular location is the flagellum axoneme. It localises to the microtubule organizing center. Its function is as follows. Microtubule inner protein (MIP) part of the dynein-decorated doublet microtubules (DMTs) in cilia and flagellar axoneme. Plays a key role in the assembly or attachment of the inner dynein arm to microtubules in sperm flagella and tracheal cilia. Forms filamentous polymers in the walls of ciliary and flagellar microtubules. The sequence is that of Tektin-2 (Tekt2) from Mus musculus (Mouse).